The chain runs to 408 residues: uncharacterized protein (408 aa).

2 disordered regions span residues 218 to 265 (EPTA…TSER) and 367 to 408 (MESE…ETPN). Positions 369 to 379 (SEVINSSSSTS) are enriched in low complexity. A compositionally biased stretch (acidic residues) spans 394–408 (IVEEVPETAENETPN).

It to C.elegans C05E11.1.

This is an uncharacterized protein from Arabidopsis thaliana (Mouse-ear cress).